Consider the following 553-residue polypeptide: Methyl-coenzyme M reductase II subunit alpha (553 aa).

Position 150 (glutamine 150) interacts with coenzyme F430. Residues arginine 228, 259-260 (KH), and arginine 273 each bind coenzyme B. Histidine 260 carries the post-translational modification Pros-methylhistidine. Arginine 274 bears the 5-methylarginine mark. A coenzyme M-binding site is contributed by tyrosine 335. Position 402 is a 2-methylglutamine (glutamine 402). Tyrosine 446 serves as a coordination point for coenzyme M. Glycine 447 is subject to 1-thioglycine. Position 452 is a (Z)-2,3-didehydroaspartate (aspartate 452). Cysteine 454 carries the post-translational modification S-methylcysteine.

The protein belongs to the methyl-coenzyme M reductase alpha subunit family. MCR is a hexamer of two alpha, two beta, and two gamma chains, forming a dimer of heterotrimers. Coenzyme F430 serves as cofactor. Post-translationally, the alpha subunit contains six modified amino acids near the active site region. Is methylated on His-260, Arg-274, Gln-402 and Cys-454, probably by the action of specific S-adenosylmethionine-dependent methyltransferases. Also contains a thioglycine at position 447, forming a thiopeptide bond. Contains a didehydroaspartate residue at position 452. The methylation on C5 of Arg-274 is a post-translational methylation not essential in vivo, but which plays a role for the stability and structural integrity of MCR.

The catalysed reaction is coenzyme B + methyl-coenzyme M = methane + coenzyme M-coenzyme B heterodisulfide. Its pathway is one-carbon metabolism; methyl-coenzyme M reduction; methane from methyl-coenzyme M: step 1/1. In terms of biological role, component of the methyl-coenzyme M reductase (MCR) I that catalyzes the reductive cleavage of methyl-coenzyme M (CoM-S-CH3 or 2-(methylthio)ethanesulfonate) using coenzyme B (CoB or 7-mercaptoheptanoylthreonine phosphate) as reductant which results in the production of methane and the mixed heterodisulfide of CoB and CoM (CoM-S-S-CoB). This is the final step in methanogenesis. The sequence is that of Methyl-coenzyme M reductase II subunit alpha (mrtA) from Methanothermobacter marburgensis (strain ATCC BAA-927 / DSM 2133 / JCM 14651 / NBRC 100331 / OCM 82 / Marburg) (Methanobacterium thermoautotrophicum).